Here is a 279-residue protein sequence, read N- to C-terminus: Thymidylate synthase (279 aa).

Residue 133–134 coordinates dUMP; the sequence is RR. Residue cysteine 154 is the Nucleophile of the active site. DUMP is bound by residues 178–181, asparagine 189, and 219–221; these read RSND and HIY. Position 181 (aspartate 181) interacts with (6R)-5,10-methylene-5,6,7,8-tetrahydrofolate. Alanine 278 is a (6R)-5,10-methylene-5,6,7,8-tetrahydrofolate binding site.

Belongs to the thymidylate synthase family. Bacterial-type ThyA subfamily. In terms of assembly, homodimer.

It is found in the cytoplasm. The enzyme catalyses dUMP + (6R)-5,10-methylene-5,6,7,8-tetrahydrofolate = 7,8-dihydrofolate + dTMP. The protein operates within pyrimidine metabolism; dTTP biosynthesis. Functionally, catalyzes the reductive methylation of 2'-deoxyuridine-5'-monophosphate (dUMP) to 2'-deoxythymidine-5'-monophosphate (dTMP) while utilizing 5,10-methylenetetrahydrofolate (mTHF) as the methyl donor and reductant in the reaction, yielding dihydrofolate (DHF) as a by-product. This enzymatic reaction provides an intracellular de novo source of dTMP, an essential precursor for DNA biosynthesis. The polypeptide is Thymidylate synthase (Streptococcus sanguinis (strain SK36)).